We begin with the raw amino-acid sequence, 436 residues long: Putative UDP-arabinose 4-epimerase 4 (436 aa).

A disordered region spans residues 1-20 (MLNSSGVRTQRRSPRPLSLG). Residues 1-60 (MLNSSGVRTQRRSPRPLSLGGRKIITPTKFAYDHHNPDKVLDFVEMDCLEPKTKNNLTGK) lie on the Cytoplasmic side of the membrane. A helical; Signal-anchor for type II membrane protein membrane pass occupies residues 61–81 (LLLVASLLILAIIVISQSSSF). Residues 82–436 (TSPSAFSQRE…KIHPHGYNSY (355 aa)) lie on the Lumenal side of the membrane. Residue 96–127 (HVLVTGGAGYIGSHAALRLLRDSYRVTIVDNL) coordinates NAD(+). The Proton acceptor role is filled by Tyr-244.

It belongs to the NAD(P)-dependent epimerase/dehydratase family. The cofactor is NAD(+).

It localises to the golgi apparatus. The protein localises to the golgi stack membrane. It catalyses the reaction UDP-beta-L-arabinopyranose = UDP-alpha-D-xylose. Its pathway is nucleotide-sugar biosynthesis; UDP-L-arabinose biosynthesis; UDP-L-arabinose from UDP-alpha-D-xylose: step 1/1. The protein operates within cell wall biogenesis; cell wall polysaccharide biosynthesis. This chain is Putative UDP-arabinose 4-epimerase 4, found in Arabidopsis thaliana (Mouse-ear cress).